The chain runs to 186 residues: Ribosome-recycling factor (186 aa).

Belongs to the RRF family.

The protein resides in the cytoplasm. Its function is as follows. Responsible for the release of ribosomes from messenger RNA at the termination of protein biosynthesis. May increase the efficiency of translation by recycling ribosomes from one round of translation to another. The polypeptide is Ribosome-recycling factor (Cupriavidus metallidurans (strain ATCC 43123 / DSM 2839 / NBRC 102507 / CH34) (Ralstonia metallidurans)).